The chain runs to 321 residues: Glucokinase (321 aa).

8 to 13 is an ATP binding site; sequence GDVGGT.

Belongs to the bacterial glucokinase family.

The protein localises to the cytoplasm. The enzyme catalyses D-glucose + ATP = D-glucose 6-phosphate + ADP + H(+). The polypeptide is Glucokinase (Salmonella paratyphi B (strain ATCC BAA-1250 / SPB7)).